A 158-amino-acid chain; its full sequence is SsrA-binding protein (158 aa).

This sequence belongs to the SmpB family.

The protein localises to the cytoplasm. Required for rescue of stalled ribosomes mediated by trans-translation. Binds to transfer-messenger RNA (tmRNA), required for stable association of tmRNA with ribosomes. tmRNA and SmpB together mimic tRNA shape, replacing the anticodon stem-loop with SmpB. tmRNA is encoded by the ssrA gene; the 2 termini fold to resemble tRNA(Ala) and it encodes a 'tag peptide', a short internal open reading frame. During trans-translation Ala-aminoacylated tmRNA acts like a tRNA, entering the A-site of stalled ribosomes, displacing the stalled mRNA. The ribosome then switches to translate the ORF on the tmRNA; the nascent peptide is terminated with the 'tag peptide' encoded by the tmRNA and targeted for degradation. The ribosome is freed to recommence translation, which seems to be the essential function of trans-translation. The protein is SsrA-binding protein of Caldicellulosiruptor bescii (strain ATCC BAA-1888 / DSM 6725 / KCTC 15123 / Z-1320) (Anaerocellum thermophilum).